Here is a 312-residue protein sequence, read N- to C-terminus: Acetyl-coenzyme A carboxylase carboxyl transferase subunit alpha (312 aa).

Residues Leu32–Glu286 form the CoA carboxyltransferase C-terminal domain.

The protein belongs to the AccA family. As to quaternary structure, acetyl-CoA carboxylase is a heterohexamer composed of biotin carboxyl carrier protein (AccB), biotin carboxylase (AccC) and two subunits each of ACCase subunit alpha (AccA) and ACCase subunit beta (AccD).

The protein resides in the cytoplasm. It catalyses the reaction N(6)-carboxybiotinyl-L-lysyl-[protein] + acetyl-CoA = N(6)-biotinyl-L-lysyl-[protein] + malonyl-CoA. It participates in lipid metabolism; malonyl-CoA biosynthesis; malonyl-CoA from acetyl-CoA: step 1/1. Component of the acetyl coenzyme A carboxylase (ACC) complex. First, biotin carboxylase catalyzes the carboxylation of biotin on its carrier protein (BCCP) and then the CO(2) group is transferred by the carboxyltransferase to acetyl-CoA to form malonyl-CoA. This Thermus thermophilus (strain ATCC BAA-163 / DSM 7039 / HB27) protein is Acetyl-coenzyme A carboxylase carboxyl transferase subunit alpha.